A 284-amino-acid polypeptide reads, in one-letter code: Nucleotide-binding protein Shal_3708 (284 aa).

8-15 lines the ATP pocket; sequence GRSGSGKS. Residue 56–59 participates in GTP binding; that stretch reads DIRN.

Belongs to the RapZ-like family.

In terms of biological role, displays ATPase and GTPase activities. In Shewanella halifaxensis (strain HAW-EB4), this protein is Nucleotide-binding protein Shal_3708.